The sequence spans 217 residues: Gas vesicle protein F2 (217 aa).

Belongs to the gas vesicle GvpF/GvpL family. In terms of assembly, binds GvpA.

The protein localises to the gas vesicle. It is found in the cytoplasm. Its function is as follows. A minor component of the gas vesicle, may be involved in preventing GvpA aggregation during gas vesicle nucleation. Gas vesicles are hollow, gas filled proteinaceous nanostructures found in several microbial planktonic microorganisms. They allow positioning of halobacteria at the optimal depth for growth in the poorly aerated, shallow brine pools of their habitat. Expression of 2 c-vac DNA fragments containing 2 divergently transcribed regions (gvpE-gvpF-gvpG-gvpH-gvpI-gvpJ-gvpK-gvpL-gvpM and gvpA-gvpC-gvpN-gvpO) allows H.volcanii to produce gas vesicles. Note that gvpD is not necessary for gas vesicle formation. The polypeptide is Gas vesicle protein F2 (Halobacterium salinarum (strain ATCC 700922 / JCM 11081 / NRC-1) (Halobacterium halobium)).